We begin with the raw amino-acid sequence, 140 residues long: Large ribosomal subunit protein bL17 (140 aa).

This sequence belongs to the bacterial ribosomal protein bL17 family. As to quaternary structure, part of the 50S ribosomal subunit. Contacts protein L32.

The sequence is that of Large ribosomal subunit protein bL17 from Ruegeria pomeroyi (strain ATCC 700808 / DSM 15171 / DSS-3) (Silicibacter pomeroyi).